A 417-amino-acid chain; its full sequence is Carboxypeptidase A2 (417 aa).

Positions 1–16 (MRLTLLLAALLGYIYC) are cleaved as a signal peptide. Residues 17-112 (QETFVGDQVL…EMLFNQQRER (96 aa)) constitute a propeptide, activation peptide. A Peptidase M14 domain is found at 120–412 (AYHTLEEIYQ…LGLKTIMEHV (293 aa)). Positions 177 and 180 each coordinate Zn(2+). Substrate contacts are provided by residues 177–180 (HARE), Arg235, and 252–253 (NR). A disulfide bond links Cys246 and Cys269. His304 is a Zn(2+) binding site. 305-306 (SY) contributes to the substrate binding site. Cys318 and Cys352 are disulfide-bonded. Residue Tyr356 coordinates substrate. The Proton donor/acceptor role is filled by Glu378.

Belongs to the peptidase M14 family. Requires Zn(2+) as cofactor.

The protein localises to the secreted. It catalyses the reaction Similar to that of carboxypeptidase A (EC 3.4.17.1), but with a preference for bulkier C-terminal residues.. Functionally, carboxypeptidase that catalyzes the release of a C-terminal amino acid, with a preference for large aromatic C-terminal residues. In Rattus norvegicus (Rat), this protein is Carboxypeptidase A2 (Cpa2).